The primary structure comprises 100 residues: MSKLFNSRLADVIRKPVITEKATNALDFNQYTFEVDHRAAKPQIKAAIEALFSVKVIGVNTMNPPRRTRRVGKFSGKRSQVKKAIVRLAEGDKIQLFPES.

Belongs to the universal ribosomal protein uL23 family. As to quaternary structure, part of the 50S ribosomal subunit. Contacts protein L29, and trigger factor when it is bound to the ribosome.

Functionally, one of the early assembly proteins it binds 23S rRNA. One of the proteins that surrounds the polypeptide exit tunnel on the outside of the ribosome. Forms the main docking site for trigger factor binding to the ribosome. The chain is Large ribosomal subunit protein uL23 from Prochlorococcus marinus (strain MIT 9301).